The sequence spans 775 residues: DENN domain-containing protein 1B (775 aa).

One can recognise a uDENN domain in the interval 14-143 (DLVLKVKCHA…YNHPVPKANT (130 aa)). The cDENN domain occupies 180 to 316 (GLPTIPESRN…VVSALKNKLK (137 aa)). Positions 318–395 (QSTATGDGVA…DGRLAKLNAG (78 aa)) constitute a dDENN domain. An FXDXF motif motif is present at residues 398-402 (FSDVF). Tyr520 bears the Phosphotyrosine mark. Phosphoserine is present on residues Ser535, Ser536, Ser549, and Ser552. The Clathrin box motif lies at 566-575 (DLLGEILDTL). Disordered regions lie at residues 635 to 654 (DSAL…VSSS) and 671 to 706 (HLGA…KRET). The span at 639 to 651 (HGKHLPPSPRKRV) shows a compositional bias: basic residues. Phosphoserine occurs at positions 652 and 653. A compositionally biased stretch (basic and acidic residues) spans 695-706 (QTDKGKTEKRET).

As to quaternary structure, interacts with RAB35. Interacts with clathrin heavy chain/CLTC. Interacts with components of the adapter protein complex 2 (AP-2) AP2A2 and AP2B1. Interacts with CD3E. Post-translationally, phosphorylated on serine and/or threonine, possibly regulating the guanine nucleotide exchange factor (GEF) activity. As to expression, highly expressed in dendritic and natural killer cells and at lower levels in other myeloid lineage cells and in pituitary. Significantly up-regulated in effector memory T-cells as compared with naive T-cells.

The protein localises to the cytoplasm. It is found in the cytosol. Its subcellular location is the cytoplasmic vesicle. It localises to the clathrin-coated vesicle. Its function is as follows. Guanine nucleotide exchange factor (GEF) for RAB35 that acts as a regulator of T-cell receptor (TCR) internalization in TH2 cells. Acts by promoting the exchange of GDP to GTP, converting inactive GDP-bound RAB35 into its active GTP-bound form. Plays a role in clathrin-mediated endocytosis. Controls cytokine production in TH2 lymphocytes by controlling the rate of TCR internalization and routing to endosomes: acts by mediating clathrin-mediated endocytosis of TCR via its interaction with the adapter protein complex 2 (AP-2) and GEF activity. Dysregulation leads to impaired TCR down-modulation and recycling, affecting cytokine production in TH2 cells. The polypeptide is DENN domain-containing protein 1B (Homo sapiens (Human)).